The following is a 784-amino-acid chain: Toll-like receptor 2 (784 aa).

A signal peptide spans 1–20 (MPHTLWMVWVLGVIISLSKE). The Extracellular portion of the chain corresponds to 21–587 (ESSNQASLSC…VRLSVSECHR (567 aa)). The cysteines at positions 30 and 36 are disulfide-linked. LRR repeat units lie at residues 54 to 77 (VKCL…RYVN), 78 to 101 (LQAL…SLGR), 102 to 125 (LEHL…PLSS), 126 to 150 (LKFL…HLTK), 151 to 175 (LRIL…GLTF), 176 to 199 (LEEL…SIQN), 200 to 223 (VSHL…LTSS), 224 to 250 (VECL…TNSL), 251 to 278 (IKKF…QISG), 279 to 308 (LLEL…DPGK), 309 to 337 (VETL…LTER), 338 to 361 (VKRI…HLKS), 362 to 388 (LEYL…AWPS), 389 to 414 (LQTL…TLKN), 415 to 437 (LTNL…WPEK), 438 to 457 (MKYL…CIPK), 458 to 478 (TLEI…NLPQ), 479 to 500 (LKEL…LLPM), and 501 to 524 (LLVL…SFHT). Residue N114 is glycosylated (N-linked (GlcNAc...) asparagine). N199 is a glycosylation site (N-linked (GlcNAc...) asparagine). The cysteines at positions 353 and 382 are disulfide-linked. N414 is a glycosylation site (N-linked (GlcNAc...) asparagine). C432 and C454 are oxidised to a cystine. Residue N442 is glycosylated (N-linked (GlcNAc...) asparagine). The region spanning 525 to 579 (LKTLEAGGNNFICSCEFLSFTQEQQALAKVLVDWPANYLCDSPSHVRGQRVQDVR) is the LRRCT domain. The helical transmembrane segment at 588–608 (AALVSGMCCALFLLILLMGVL) threads the bilayer. Topologically, residues 609–784 (CHRFHGLWYM…WVNLRAAIKS (176 aa)) are cytoplasmic. The 144-residue stretch at 639-782 (ICYDAFVSYS…GFWVNLRAAI (144 aa)) folds into the TIR domain. A Glycyl lysine isopeptide (Lys-Gly) (interchain with G-Cter in ubiquitin) cross-link involves residue K754. Positions 761-778 (YLEWPMDEARQEGFWVNL) match the ATG16L1-binding motif motif.

This sequence belongs to the Toll-like receptor family. Interacts with LY96, TLR1 and TLR6 (via extracellular domain). TLR2 seems to exist in heterodimers with either TLR1 or TLR6 before stimulation by the ligand. The heterodimers form bigger oligomers in response to their corresponding ligands as well as further heterotypic associations with other receptors such as CD14 and/or CD36. Binds MYD88 (via TIR domain). Interacts with TICAM1. Interacts with CNPY3. Interacts with ATG16L1. Interacts with PPP1R11. Interacts with TICAM2. Interacts with TIRAP. In terms of processing, ubiquitinated at Lys-754 by PPP1R11, leading to its degradation. Deubiquitinated by USP2. Post-translationally, glycosylation of Asn-442 is critical for secretion of the N-terminal ectodomain of TLR2.

It localises to the membrane. It is found in the cytoplasmic vesicle. The protein resides in the phagosome membrane. Its subcellular location is the membrane raft. Its function is as follows. Cooperates with LY96 to mediate the innate immune response to bacterial lipoproteins and other microbial cell wall components. Cooperates with TLR1 or TLR6 to mediate the innate immune response to bacterial lipoproteins or lipopeptides. Acts via MYD88 and TRAF6, leading to NF-kappa-B activation, cytokine secretion and the inflammatory response. May also promote apoptosis in response to lipoproteins. Forms activation clusters composed of several receptors depending on the ligand, these clusters trigger signaling from the cell surface and subsequently are targeted to the Golgi in a lipid-raft dependent pathway. Forms the cluster TLR2:TLR6:CD14:CD36 in response to diacylated lipopeptides and TLR2:TLR1:CD14 in response to triacylated lipopeptides. In Macaca mulatta (Rhesus macaque), this protein is Toll-like receptor 2 (TLR2).